We begin with the raw amino-acid sequence, 1960 residues long: [F-actin]-monooxygenase MICAL3 (1960 aa).

The tract at residues 2-494 (EESKNEATNR…RHLYDTGDTK (493 aa)) is monooxygenase domain. FAD is bound by residues Cys-97, 116-118 (EKR), 123-125 (RNN), Phe-183, Tyr-298, and Asp-398. A Calponin-homology (CH) domain is found at 518–624 (VARSSKLLGW…YLTQFYEMFK (107 aa)). At Ser-649 the chain carries Phosphoserine. Positions 658–704 (GQTISRKRSPKDKKEKDLDGAGKRRKTSQSEEEDTPRGHRGARPTLV) are disordered. The span at 669 to 679 (DKKEKDLDGAG) shows a compositional bias: basic and acidic residues. A phosphoserine mark is found at Ser-685 and Ser-687. The 63-residue stretch at 762–824 (DTCYFCQKRV…KPHYCYRLSG (63 aa)) folds into the LIM zinc-binding domain. Residues Cys-764, Cys-767, His-785, Cys-788, Cys-791, Cys-794, Cys-814, and His-817 each coordinate Zn(2+). 2 disordered regions span residues 826-887 (AQRK…LRGT) and 906-1295 (LEEV…EALK). Thr-887 is modified (phosphothreonine). Ser-971 is subject to Phosphoserine. The span at 984 to 1014 (GEEEEEDEEDEEEEEEEEDEEDEEEDEDESS) shows a compositional bias: acidic residues. Basic and acidic residues-rich tracts occupy residues 1039-1051 (HWTH…EERA) and 1072-1084 (DVDS…KGEA). Phosphoserine occurs at positions 1129, 1139, 1156, and 1188. Composition is skewed to pro residues over residues 1192 to 1203 (SPLPEPSTPPAE) and 1217 to 1233 (RTPP…PPTQ). At Ser-1250 the chain carries Phosphoserine. Residue Thr-1252 is modified to Phosphothreonine. Phosphoserine is present on residues Ser-1254, Ser-1286, and Ser-1313. A compositionally biased stretch (polar residues) spans 1277-1286 (QGVTKDTLGS). Disordered regions lie at residues 1316–1550 (LTPV…KRGL) and 1564–1782 (RMRA…EEEL). Residue Thr-1317 is modified to Phosphothreonine. Over residues 1379 to 1393 (PDREPKGPREEHRDL) the composition is skewed to basic and acidic residues. Residues 1394 to 1406 (SSSSGLGLQGSSS) are compositionally biased toward low complexity. Ser-1404 is modified (phosphoserine). The span at 1407 to 1425 (RTRTPGSQSFNTSDSTMLT) shows a compositional bias: polar residues. A Phosphothreonine modification is found at Thr-1425. The segment covering 1485–1503 (SVDEIPFADDVEDTYDDNT) has biased composition (acidic residues). Residues 1594–1611 (AAAAPRTPRTPAPRRATA) show a composition bias toward low complexity. The span at 1616–1627 (GPEEPAPRHEAT) shows a compositional bias: basic and acidic residues. Residues 1633–1653 (SPPSDSGGPDGSVTSSEGSSG) are compositionally biased toward low complexity. A compositionally biased stretch (basic residues) spans 1654–1672 (KSKKRSSLFSPRRSKKEKK). Phosphoserine occurs at positions 1660 and 1663. Positions 1718–1727 (CPSTPSSGTT) are enriched in polar residues. Residues 1762 to 1778 (VLERTSQKSRKEPRTYT) show a composition bias toward basic and acidic residues. Residues 1779 to 1952 (EEELNAKLTR…DKDLEAAMLS (174 aa)) are a coiled coil. One can recognise a bMERB domain in the interval 1799–1948 (KQEELKRLHR…EKEEDKDLEA (150 aa)). At Ser-1870 the chain carries Phosphoserine.

This sequence belongs to the Mical family. Interacts with RAB1B, RAB8A, RAB10, RAB13 and RAB15 (in their GTP-bound forms); binding to RAB1B is of low affinity compared to other Rab proteins; at least in case of RAB8A can bind 2 molecules of RAB8A simultaneously through a high and a low affinity binding site, respectively. Interacts with ERC1 and RAB8A; may bridge ERC1 with RAB8A. Interacts with KIF23 and ERC1; enhances the interaction between KIF23 and ERC1. Interacts with NINL. The cofactor is FAD.

It is found in the cytoplasm. Its subcellular location is the cell cortex. The protein resides in the cytoskeleton. It localises to the nucleus. The protein localises to the midbody. It is found in the spindle. Its subcellular location is the cilium basal body. It catalyses the reaction L-methionyl-[F-actin] + NADPH + O2 + H(+) = L-methionyl-(R)-S-oxide-[F-actin] + NADP(+) + H2O. Monooxygenase that promotes depolymerization of F-actin by mediating oxidation of specific methionine residues on actin to form methionine-sulfoxide, resulting in actin filament disassembly and preventing repolymerization. In the absence of actin, it also functions as a NADPH oxidase producing H(2)O(2). Seems to act as Rab effector protein and play a role in vesicle trafficking. Involved in exocytic vesicles tethering and fusion: the monooxygenase activity is required for this process and implicates RAB8A associated with exocytotic vesicles. Required for cytokinesis. Contributes to stabilization and/or maturation of the intercellular bridge independently of its monooxygenase activity. Promotes recruitment of Rab8 and ERC1 to the intercellular bridge, and together these proteins are proposed to function in timely abscission. This is [F-actin]-monooxygenase MICAL3 (MICAL3) from Bos taurus (Bovine).